The primary structure comprises 378 residues: Succinate--CoA ligase [ADP-forming] subunit beta (378 aa).

Residues 9-237 (RDIVARYGIP…IAGEPESEIK (229 aa)) form the ATP-grasp domain. ATP is bound by residues lysine 45, 52 to 54 (GRG), isoleucine 94, and glutamate 99. Asparagine 192 and aspartate 206 together coordinate Mg(2+). Residues asparagine 257 and 314–316 (GIT) each bind substrate.

It belongs to the succinate/malate CoA ligase beta subunit family. In terms of assembly, heterotetramer of two alpha and two beta subunits. It depends on Mg(2+) as a cofactor.

The enzyme catalyses succinate + ATP + CoA = succinyl-CoA + ADP + phosphate. The catalysed reaction is GTP + succinate + CoA = succinyl-CoA + GDP + phosphate. It functions in the pathway carbohydrate metabolism; tricarboxylic acid cycle; succinate from succinyl-CoA (ligase route): step 1/1. Functionally, succinyl-CoA synthetase functions in the citric acid cycle (TCA), coupling the hydrolysis of succinyl-CoA to the synthesis of either ATP or GTP and thus represents the only step of substrate-level phosphorylation in the TCA. The beta subunit provides nucleotide specificity of the enzyme and binds the substrate succinate, while the binding sites for coenzyme A and phosphate are found in the alpha subunit. The sequence is that of Succinate--CoA ligase [ADP-forming] subunit beta from Herpetosiphon aurantiacus (strain ATCC 23779 / DSM 785 / 114-95).